Reading from the N-terminus, the 245-residue chain is MGLIWLLLLSLLEPSWPTTGPGTRLRRDAGGRGGVYEHLGGAPRRRKLYCATKYHLQLHPSGRVNGSLENSAYSILEITAVEVGVVAIKGLFSGRYLAMNKRGRLYASDHYNAECEFVERIHELGYNTYASRLYRTGSSGPGAQRQPGAQRPWYVSVNGKGRPRRGFKTRRTQKSSLFLPRVLGHKDHEMVRLLQSSQPRAPGEGSQPRQRRQKKQSPGDHGKMETLSTRATPSTQLHTGGLAVA.

Positions 1-17 are cleaved as a signal peptide; that stretch reads MGLIWLLLLSLLEPSWP. The N-linked (GlcNAc...) asparagine glycan is linked to Asn-65. Disordered regions lie at residues 137–181 and 195–245; these read GSSG…FLPR and QSSQ…LAVA. The segment covering 161–173 has biased composition (basic residues); it reads GRPRRGFKTRRTQ. Residues 226–238 are compositionally biased toward polar residues; that stretch reads TLSTRATPSTQLH.

It belongs to the heparin-binding growth factors family. As to quaternary structure, interacts with FGFR1 and FGFR2. Affinity between fibroblast growth factors (FGFs) and their receptors is increased by heparan sulfate glycosaminoglycans that function as coreceptors. In terms of processing, glycosylated.

Its subcellular location is the nucleus. The protein resides in the endoplasmic reticulum. It is found in the golgi apparatus. In terms of biological role, plays an important role in the regulation of embryonic development, cell proliferation, and cell differentiation. Required for normal ear development. This Mus musculus (Mouse) protein is Fibroblast growth factor 3 (Fgf3).